Reading from the N-terminus, the 319-residue chain is Epoxyqueuosine reductase (319 aa).

The Proton donor role is filled by Asp128. One can recognise a 4Fe-4S ferredoxin-type domain in the interval 173–202 (EANDPHPNYCGTCTRCLSACPTAALVEPAV). The [4Fe-4S] cluster site is built by Cys182, Cys185, Cys188, Cys192, Cys208, Cys236, Cys239, and Cys243.

It belongs to the QueG family. Monomer. It depends on cob(II)alamin as a cofactor. The cofactor is [4Fe-4S] cluster.

The protein localises to the cytoplasm. The enzyme catalyses epoxyqueuosine(34) in tRNA + AH2 = queuosine(34) in tRNA + A + H2O. The protein operates within tRNA modification; tRNA-queuosine biosynthesis. Functionally, catalyzes the conversion of epoxyqueuosine (oQ) to queuosine (Q), which is a hypermodified base found in the wobble positions of tRNA(Asp), tRNA(Asn), tRNA(His) and tRNA(Tyr). The sequence is that of Epoxyqueuosine reductase from Gloeobacter violaceus (strain ATCC 29082 / PCC 7421).